Here is a 225-residue protein sequence, read N- to C-terminus: Protein-L-isoaspartate O-methyltransferase (225 aa).

Residue Ser75 is part of the active site.

The protein belongs to the methyltransferase superfamily. L-isoaspartyl/D-aspartyl protein methyltransferase family.

It localises to the cytoplasm. It catalyses the reaction [protein]-L-isoaspartate + S-adenosyl-L-methionine = [protein]-L-isoaspartate alpha-methyl ester + S-adenosyl-L-homocysteine. Functionally, catalyzes the methyl esterification of L-isoaspartyl residues in peptides and proteins that result from spontaneous decomposition of normal L-aspartyl and L-asparaginyl residues. It plays a role in the repair and/or degradation of damaged proteins. This is Protein-L-isoaspartate O-methyltransferase from Xanthomonas euvesicatoria pv. vesicatoria (strain 85-10) (Xanthomonas campestris pv. vesicatoria).